The chain runs to 409 residues: Calsequestrin-2 (409 aa).

A signal peptide spans 1–19; it reads MKRAHLFVVGVYLLSSCRA. A Phosphotyrosine modification is found at tyrosine 282. An N-linked (GlcNAc...) asparagine glycan is attached at asparagine 335. The interval 364–409 is disordered; that stretch reads DVLSGKINTEDDDNEDEDDDDDNDDDDDDNGNSDEEDNDDSDEDDE. Acidic residues predominate over residues 373-409; that stretch reads EDDDNEDEDDDDDNDDDDDDNGNSDEEDNDDSDEDDE.

The protein belongs to the calsequestrin family. As to quaternary structure, monomer, homodimer and homooligomer. Mostly monomeric in the absence of calcium. Forms higher oligomers in a calcium-dependent manner. Dimers associate to form tetramers, that then form linear homomer chains. Interacts with ASPH and TRDN. In terms of processing, phosphorylation in the C-terminus, probably by CK2, moderately increases calcium buffering capacity. N-glycosylated. As to expression, detected in heart muscle (at protein level).

Its subcellular location is the sarcoplasmic reticulum lumen. Functionally, calsequestrin is a high-capacity, moderate affinity, calcium-binding protein and thus acts as an internal calcium store in muscle. Calcium ions are bound by clusters of acidic residues at the protein surface, especially at the interface between subunits. Can bind around 60 Ca(2+) ions. Regulates the release of lumenal Ca(2+) via the calcium release channel RYR2; this plays an important role in triggering muscle contraction. Plays a role in excitation-contraction coupling in the heart and in regulating the rate of heart beats. The protein is Calsequestrin-2 (CASQ2) of Oryctolagus cuniculus (Rabbit).